The sequence spans 500 residues: Aldehyde dehydrogenase, mitochondrial (500 aa).

N6-acetyllysine occurs at positions 35, 56, 61, and 142. Glycine 245–glycine 250 serves as a coordination point for NAD(+). The active-site Proton acceptor is glutamate 268. Catalysis depends on cysteine 302, which acts as the Nucleophile. Lysine 351, lysine 358, lysine 366, lysine 390, lysine 409, lysine 411, lysine 424, and lysine 434 each carry N6-acetyllysine.

It belongs to the aldehyde dehydrogenase family. Homotetramer. In terms of processing, in response to mitochondrial stress, the precursor protein is ubiquitinated by the SIFI complex in the cytoplasm before mitochondrial import, leading to its degradation. Within the SIFI complex, UBR4 initiates ubiquitin chain that are further elongated or branched by KCMF1.

It localises to the mitochondrion matrix. The enzyme catalyses an aldehyde + NAD(+) + H2O = a carboxylate + NADH + 2 H(+). It participates in alcohol metabolism; ethanol degradation; acetate from ethanol: step 2/2. In terms of biological role, required for clearance of cellular formaldehyde, a cytotoxic and carcinogenic metabolite that induces DNA damage. The chain is Aldehyde dehydrogenase, mitochondrial (ALDH2) from Mesocricetus auratus (Golden hamster).